An 857-amino-acid chain; its full sequence is Bifunctional levopimaradiene synthase, chloroplastic (857 aa).

The N-terminal 33 residues, 1–33 (MALPSSSLSSQIHTGATTQCIPHFHGSLNAGTS), are a transit peptide targeting the chloroplast. Residue lysine 257 participates in substrate binding. 2 residues coordinate Mg(2+): aspartate 390 and aspartate 392. The DXDD motif signature appears at 390 to 393 (DIDD). Lysine 477 is a substrate binding site. Mg(2+) is bound by residues aspartate 609, aspartate 613, asparagine 753, threonine 757, and glutamate 761. Residues 609–613 (DDLYD) carry the DDXXD motif motif.

It belongs to the terpene synthase family. Tpsd subfamily. The cofactor is Mg(2+).

It localises to the plastid. It is found in the chloroplast. The enzyme catalyses (2E,6E,10E)-geranylgeranyl diphosphate = (+)-copalyl diphosphate. It carries out the reaction (+)-copalyl diphosphate = abieta-7,13-diene + diphosphate. It catalyses the reaction (+)-copalyl diphosphate = abieta-8(14),12-diene + diphosphate. The catalysed reaction is (+)-copalyl diphosphate = neoabietadiene + diphosphate. Its pathway is terpene metabolism; oleoresin biosynthesis. In terms of biological role, involved in defensive oleoresin formation in conifers in response to insect attack or other injury. Involved in diterpene (C20) olefins biosynthesis. Bifunctional enzyme that catalyzes two sequential cyclizations of geranylgeranyl diphosphate (GGPP) to levopimaradiene. Levopimaradiene is the major products of the enzyme with abietadiene and neoabietadiene. No activity with farnesyl diphosphate (FPP) as substrate. The chain is Bifunctional levopimaradiene synthase, chloroplastic from Pinus contorta (Shore pine).